A 172-amino-acid polypeptide reads, in one-letter code: Adenine phosphoribosyltransferase (172 aa).

It belongs to the purine/pyrimidine phosphoribosyltransferase family. As to quaternary structure, homodimer.

Its subcellular location is the cytoplasm. It catalyses the reaction AMP + diphosphate = 5-phospho-alpha-D-ribose 1-diphosphate + adenine. It functions in the pathway purine metabolism; AMP biosynthesis via salvage pathway; AMP from adenine: step 1/1. Functionally, catalyzes a salvage reaction resulting in the formation of AMP, that is energically less costly than de novo synthesis. The polypeptide is Adenine phosphoribosyltransferase (Staphylococcus haemolyticus (strain JCSC1435)).